A 183-amino-acid chain; its full sequence is MKTIEVDEELYRYIASHTQHIGESASDILRRMLKFTAGQPAAVNDTQPVSAPAPSKAAPSAGNESRPQDRVRAVRELMLSDEYAEQKRAVNRFMLILSTLYRLDTAAFAEATTSLQGRTRIYFAGDEHTLLQSGTHTKPKHVPGTPYWVITNTNTGRKRSMVEHIMLSMQFPSELAEKVCGTI.

Positions 43 to 70 (VNDTQPVSAPAPSKAAPSAGNESRPQDR) are disordered. Over residues 50 to 61 (SAPAPSKAAPSA) the composition is skewed to low complexity. Interaction with DNA stretches follow at residues 89 to 90 (AV), 118 to 122 (RTRIY), and 152 to 158 (NTNTGRK).

This sequence belongs to the SeqA family. As to quaternary structure, homodimer. Polymerizes to form helical filaments.

It localises to the cytoplasm. In terms of biological role, negative regulator of replication initiation, which contributes to regulation of DNA replication and ensures that replication initiation occurs exactly once per chromosome per cell cycle. Binds to pairs of hemimethylated GATC sequences in the oriC region, thus preventing assembly of replication proteins and re-initiation at newly replicated origins. Repression is relieved when the region becomes fully methylated. The chain is Negative modulator of initiation of replication from Pantoea ananatis (strain AJ13355).